A 95-amino-acid chain; its full sequence is Trypomastigote decay-accelerating factor (95 aa).

The protein belongs to the receptors of complement activation (RCA) family.

In terms of biological role, interferes with the efficient assembly of the host C3 convertase. Could protect parasites from complement-mediated lysis by sera from a number of different species. The protein is Trypomastigote decay-accelerating factor of Trypanosoma cruzi.